Here is a 530-residue protein sequence, read N- to C-terminus: NAD(+) kinase (530 aa).

3 disordered regions span residues 1–27 (MKEN…HNNN), 57–99 (ISSE…KSSN), and 486–530 (SLEA…RFSV). Basic and acidic residues predominate over residues 13 to 25 (WVNEEDGRNDHHN). Over residues 59 to 75 (SESSSRRSSLLNKDSSL) the composition is skewed to low complexity. The segment covering 88–99 (INGTRGSSKSSN) has biased composition (polar residues). A phosphoserine mark is found at Ser-499 and Ser-503. Acidic residues predominate over residues 499-508 (SDDESDDESV).

Belongs to the NAD kinase family. In terms of assembly, homohexamer.

It carries out the reaction NAD(+) + ATP = ADP + NADP(+) + H(+). Its function is as follows. Specifically phosphorylates NAD in the presence of ATP, dATP, or CTP as phosphoryl donors. The protein is NAD(+) kinase (UTR1) of Saccharomyces cerevisiae (strain ATCC 204508 / S288c) (Baker's yeast).